The primary structure comprises 87 residues: Chaperone NapD (87 aa).

It belongs to the NapD family. In terms of assembly, interacts with the cytoplasmic NapA precursor.

It is found in the cytoplasm. In terms of biological role, chaperone for NapA, the catalytic subunit of the periplasmic nitrate reductase. It binds directly and specifically to the twin-arginine signal peptide of NapA, preventing premature interaction with the Tat translocase and premature export. This is Chaperone NapD from Escherichia coli O157:H7.